A 318-amino-acid polypeptide reads, in one-letter code: MLHLIYISIIVVLIIILISYTRKPKYFRITAPRSVALFHGIHPLNPKNYKTFSEEFETILNNAIEDGDFKGQLTEPCSYALRGGKYIRPIILMEIVRACQLQHSFGAPIYPAEAALAVEYFHVASLIIDDMPSFDNDVKRRNKDTVWARFGVAKAQMSALALTMQGFQNICRQIDWIKEHCPRFPDPNQLGALLCTFVSHSLNSAGSGQLVDTPEKTIPFFKIAFIMGWVLGTGSVEDIGMIERAAHCFGNAFQLADDIKDHDTDTGWNYAKIHGKRKTFDDVAQFLQECKKILHGKKIYTSIWNEIFQKVINVALGT.

A helical membrane pass occupies residues 1-21; that stretch reads MLHLIYISIIVVLIIILISYT. 3 residues coordinate isopentenyl diphosphate: Lys-85, Arg-88, and His-122. Mg(2+) is bound by residues Asp-129 and Asp-135. Arg-140 provides a ligand contact to dimethylallyl diphosphate. Arg-141 contributes to the isopentenyl diphosphate binding site. Residues Lys-216, Thr-217, and Gln-254 each contribute to the dimethylallyl diphosphate site.

This sequence belongs to the FPP/GGPP synthase family. Asfivirus trans-prenyltransferase subfamily. The cofactor is Mg(2+).

It localises to the host endoplasmic reticulum. It is found in the host membrane. The enzyme catalyses isopentenyl diphosphate + dimethylallyl diphosphate = (2E)-geranyl diphosphate + diphosphate. It carries out the reaction isopentenyl diphosphate + (2E)-geranyl diphosphate = (2E,6E)-farnesyl diphosphate + diphosphate. The catalysed reaction is isopentenyl diphosphate + (2E,6E)-farnesyl diphosphate = (2E,6E,10E)-geranylgeranyl diphosphate + diphosphate. It catalyses the reaction isopentenyl diphosphate + (2E,6E,10E)-geranylgeranyl diphosphate = (2E,6E,10E,14E)-geranylfarnesyl diphosphate + diphosphate. It functions in the pathway isoprenoid biosynthesis; farnesyl diphosphate biosynthesis; farnesyl diphosphate from geranyl diphosphate and isopentenyl diphosphate: step 1/1. The protein operates within isoprenoid biosynthesis; geranyl diphosphate biosynthesis; geranyl diphosphate from dimethylallyl diphosphate and isopentenyl diphosphate: step 1/1. Its pathway is isoprenoid biosynthesis; geranylgeranyl diphosphate biosynthesis; geranylgeranyl diphosphate from farnesyl diphosphate and isopentenyl diphosphate: step 1/1. Its function is as follows. Trans-prenyltransferase that catalyzes the sequential condensation of isopentenyl diphosphate (IPP) with different allylic diphosphates, such as dimethylallyl diphosphate (DMAPP), geranyl diphosphate (GPP), farnesyl diphosphate (FPP) and geranylgeranyl diphosphate (GGPP), farnesyl diphosphate being the best allylic substrate. The chain is Trans-prenyltransferase from African swine fever virus (isolate Warthog/Namibia/Wart80/1980) (ASFV).